A 232-amino-acid polypeptide reads, in one-letter code: Protein Mis18-alpha (232 aa).

Residues Ser-36, Ser-39, and Ser-40 each carry the phosphoserine modification. In terms of domain architecture, Mis18 spans 79–177 (PLVFLCSGCR…SVEAIESYIL (99 aa)). Residues Cys-84, Cys-87, Cys-140, and Cys-143 each contribute to the Zn(2+) site. Residue Lys-161 forms a Glycyl lysine isopeptide (Lys-Gly) (interchain with G-Cter in SUMO2) linkage. A Phosphoserine modification is found at Ser-232.

This sequence belongs to the mis18 family. In terms of assembly, homodimer, and heterodimer with OIP5/MIS18B. Identified in a complex containing MIS18A, OIP5/MIS18B, MIS18BP1, RBBP7 and RBBP4.

It is found in the nucleus. Its subcellular location is the chromosome. It localises to the centromere. Required for recruitment of CENPA to centromeres and normal chromosome segregation during mitosis. In Otolemur garnettii (Small-eared galago), this protein is Protein Mis18-alpha (MIS18A).